Reading from the N-terminus, the 65-residue chain is Hainantoxin-X.3 (65 aa).

The signal sequence occupies residues 1–20 (MNMKILVLVAVLCLVVSTHA). Positions 21–37 (ERHSKTDMGDSPMIQER) are excised as a propeptide. 3 cysteine pairs are disulfide-bonded: cysteine 39–cysteine 56, cysteine 46–cysteine 59, and cysteine 55–cysteine 64.

Belongs to the neurotoxin 36 family. 02 subfamily. Expressed by the venom gland.

It localises to the secreted. Its function is as follows. Reversibly blocks N-type calcium channels (Cav2.2/CACNA1B) in rat dorsal root ganglion cells. Elicits no toxic symptoms in either vertebrates or invertebrates during a period of 48 hours post-injection, when it was assayed in vivo by direct injection into mice and cockroaches. In Cyriopagopus hainanus (Chinese bird spider), this protein is Hainantoxin-X.3.